The primary structure comprises 255 residues: tRNA (guanine-N(1)-)-methyltransferase (255 aa).

S-adenosyl-L-methionine is bound by residues Gly117 and Leu137 to Leu142.

This sequence belongs to the RNA methyltransferase TrmD family. In terms of assembly, homodimer.

It is found in the cytoplasm. The catalysed reaction is guanosine(37) in tRNA + S-adenosyl-L-methionine = N(1)-methylguanosine(37) in tRNA + S-adenosyl-L-homocysteine + H(+). Specifically methylates guanosine-37 in various tRNAs. This Paraburkholderia xenovorans (strain LB400) protein is tRNA (guanine-N(1)-)-methyltransferase.